The following is a 153-amino-acid chain: Heavy metal-associated isoprenylated plant protein 26 (153 aa).

Positions 25–89 (LQTVEIKVKM…MSHRTGKKVE (65 aa)) constitute an HMA domain. Cys-36 and Cys-39 together coordinate a metal cation. Residue Cys-150 is modified to Cysteine methyl ester. The S-farnesyl cysteine moiety is linked to residue Cys-150. A propeptide spans 151 to 153 (VVM) (removed in mature form).

This sequence belongs to the HIPP family. Interacts with ZHD11/HB29 and ACBP2 (via ankyrin repeats). May also interact with HB21. As to expression, expressed in roots, stems and flowers. Lower expression in siliques and leaves. Expressed in the vascular tissues. Detected in lateral roots, shoot apical meristem, petals of unopened flowers and weak expression in leaf vasculature.

It is found in the nucleus membrane. The protein resides in the cell membrane. Its function is as follows. Heavy-metal-binding protein. Binds lead, cadmium and copper. May be involved in heavy-metal transport. May be involved in cadmium transport and play a role in cadmium detoxification. The protein is Heavy metal-associated isoprenylated plant protein 26 of Arabidopsis thaliana (Mouse-ear cress).